The chain runs to 273 residues: Oligodendrocyte transcription factor 3 (273 aa).

Positions 1–14 are enriched in low complexity; sequence MNSDSSSVSSRASS. The segment at 1–72 is disordered; that stretch reads MNSDSSSVSS…KAAGESSKYK (72 aa). Positions 24 to 34 are enriched in basic residues; it reads DHHHRHHHHHQ. Residues 37–47 show a composition bias toward polar residues; it reads RLNSVSSTQGD. A coiled-coil region spans residues 69 to 90; that stretch reads SKYKIKKQLSEQDLQQLRLKIN. The bHLH domain maps to 84–138; the sequence is QLRLKINGRERKRMHDLNLAMDGLREVMPYAHGPSVRKLSKIATLLLARNYILML.

In terms of tissue distribution, weakly expressed, mainly in non-neural tissues.

The protein localises to the nucleus. Functionally, may determine the distinct specification program of class A neurons in the dorsal part of the spinal cord and suppress specification of class B neurons. The sequence is that of Oligodendrocyte transcription factor 3 (Olig3) from Mus musculus (Mouse).